The following is a 506-amino-acid chain: MAP kinase kinase MKK2/SSP33 (506 aa).

Residues methionine 1–asparagine 69 form a disordered region. A compositionally biased stretch (polar residues) spans leucine 26–tyrosine 52. Over residues serine 53–asparagine 69 the composition is skewed to low complexity. In terms of domain architecture, Protein kinase spans isoleucine 214–isoleucine 481. Residues leucine 220 to valine 228 and lysine 243 contribute to the ATP site. Aspartate 342 functions as the Proton acceptor in the catalytic mechanism.

The protein belongs to the protein kinase superfamily. STE Ser/Thr protein kinase family. MAP kinase kinase subfamily.

The enzyme catalyses L-seryl-[protein] + ATP = O-phospho-L-seryl-[protein] + ADP + H(+). The catalysed reaction is L-threonyl-[protein] + ATP = O-phospho-L-threonyl-[protein] + ADP + H(+). It carries out the reaction L-tyrosyl-[protein] + ATP = O-phospho-L-tyrosyl-[protein] + ADP + H(+). Serine/threonine protein kinase involved in a signal transduction pathway that plays a role in yeast cell morphogenesis and cell growth. This pathway seems to start by SMP3; then involves the kinase PKC1 that may act on the BCK1 kinase that then phosphorylates MKK1 and MKK2 which themselves phosphorylate the MPK1 kinase. This Saccharomyces cerevisiae (strain ATCC 204508 / S288c) (Baker's yeast) protein is MAP kinase kinase MKK2/SSP33 (MKK2).